The sequence spans 37 residues: Large ribosomal subunit protein bL36 (37 aa).

This sequence belongs to the bacterial ribosomal protein bL36 family.

This is Large ribosomal subunit protein bL36 from Nitratiruptor sp. (strain SB155-2).